The primary structure comprises 502 residues: Probable cytochrome P450 514A4 (502 aa).

The helical transmembrane segment at 4–24 (IFTIILTITILVLSLILKDLL) threads the bilayer. Cys-448 is a binding site for heme.

The protein belongs to the cytochrome P450 family. It depends on heme as a cofactor.

Its subcellular location is the membrane. The chain is Probable cytochrome P450 514A4 (cyp514A4) from Dictyostelium discoideum (Social amoeba).